A 116-amino-acid chain; its full sequence is Large ribosomal subunit protein bL19 (116 aa).

This sequence belongs to the bacterial ribosomal protein bL19 family.

In terms of biological role, this protein is located at the 30S-50S ribosomal subunit interface and may play a role in the structure and function of the aminoacyl-tRNA binding site. The sequence is that of Large ribosomal subunit protein bL19 from Blochmanniella pennsylvanica (strain BPEN).